The sequence spans 93 residues: UPF0298 protein LMHCC_0506 (93 aa).

It belongs to the UPF0298 family.

Its subcellular location is the cytoplasm. This is UPF0298 protein LMHCC_0506 from Listeria monocytogenes serotype 4a (strain HCC23).